Reading from the N-terminus, the 136-residue chain is Small ribosomal subunit protein uS9 (136 aa).

Positions 103–116 (PLKTEGHLSRDPRA) are enriched in basic and acidic residues. The disordered stretch occupies residues 103–136 (PLKTEGHLSRDPRAKERRKYGLKKARKAPQFSKR). A compositionally biased stretch (basic residues) spans 117-136 (KERRKYGLKKARKAPQFSKR).

Belongs to the universal ribosomal protein uS9 family.

The chain is Small ribosomal subunit protein uS9 (rpsI) from Prochlorococcus marinus (strain SARG / CCMP1375 / SS120).